We begin with the raw amino-acid sequence, 718 residues long: Ubiquitin homeostasis protein lub1 (718 aa).

7 WD repeats span residues 12–50, 54–98, 101–139, 140–178, 180–217, 218–257, and 259–296; these read GHKQ…WTPH, NHEG…PSYY, GHES…YVLK, GHQS…KSIL, HNDC…YELH, GHTS…QCIT, and PTTS…VAPT. The region spanning 353-448 is the PFU domain; it reads QWSQKENEWK…QGHSLESKKE (96 aa). Residues 462–717 form the PUL domain; sequence TIFPVSQLLF…VDAEKQILSL (256 aa).

In terms of assembly, interacts with cdc48.

It is found in the nucleus. It localises to the cytoplasm. Acts as a negative regulator of vacuole-dependent ubiquitin degradation. The protein is Ubiquitin homeostasis protein lub1 (lub1) of Schizosaccharomyces pombe (strain 972 / ATCC 24843) (Fission yeast).